Reading from the N-terminus, the 991-residue chain is Transcription factor ROB1 (991 aa).

The segment at residues 17-43 (CTVCRTIKRKCDGNTPCSNCLKRNQEC) is a DNA-binding region (zn(2)-C6 fungal-type). Disordered stretches follow at residues 150–188 (LNQQQQQQQPSPQSLSQSSASEVSTRSSPASPNSTISLA), 792–875 (FYAQ…EDNP), and 901–959 (QEEG…PQLP). Residues 152 to 168 (QQQQQQQPSPQSLSQSS) are compositionally biased toward low complexity. Polar residues predominate over residues 169-187 (ASEVSTRSSPASPNSTISL). The segment covering 795-806 (QQQQQQQQQQQQ) has biased composition (low complexity). 2 stretches are compositionally biased toward basic and acidic residues: residues 807–817 (PKHEYHDHQQE) and 825–855 (QEEHSEKDIKIEIKDEPQPQEEHIHQDYPMK). The segment covering 907–931 (QQQQQQQQEQVQQEQVQQEQVQQDQ) has biased composition (low complexity).

It localises to the nucleus. In terms of biological role, transcription factor that mediates conventional biofilm formation and plays a key role in microcolony formation under both flow and static conditions and to epithelial surfaces. Modulates infection of mammalian hosts. The chain is Transcription factor ROB1 from Candida albicans (strain SC5314 / ATCC MYA-2876) (Yeast).